A 340-amino-acid polypeptide reads, in one-letter code: Ketol-acid reductoisomerase (NADP(+)) (340 aa).

The 180-residue stretch at 3-182 folds into the KARI N-terminal Rossmann domain; that stretch reads VQMEYEKDVK…GAARVGLLET (180 aa). NADP(+) contacts are provided by residues 26-29, Arg49, Ser53, and 83-86; these read YGSQ and DEIQ. Residue His108 is part of the active site. Gly134 serves as a coordination point for NADP(+). Residues 183–328 form the KARI C-terminal knotted domain; that stretch reads TYKEETEEDL…AELRKAMPFV (146 aa). Positions 191, 195, 227, and 231 each coordinate Mg(2+). Ser252 provides a ligand contact to substrate.

This sequence belongs to the ketol-acid reductoisomerase family. It depends on Mg(2+) as a cofactor.

It catalyses the reaction (2R)-2,3-dihydroxy-3-methylbutanoate + NADP(+) = (2S)-2-acetolactate + NADPH + H(+). The catalysed reaction is (2R,3R)-2,3-dihydroxy-3-methylpentanoate + NADP(+) = (S)-2-ethyl-2-hydroxy-3-oxobutanoate + NADPH + H(+). It participates in amino-acid biosynthesis; L-isoleucine biosynthesis; L-isoleucine from 2-oxobutanoate: step 2/4. The protein operates within amino-acid biosynthesis; L-valine biosynthesis; L-valine from pyruvate: step 2/4. In terms of biological role, involved in the biosynthesis of branched-chain amino acids (BCAA). Catalyzes an alkyl-migration followed by a ketol-acid reduction of (S)-2-acetolactate (S2AL) to yield (R)-2,3-dihydroxy-isovalerate. In the isomerase reaction, S2AL is rearranged via a Mg-dependent methyl migration to produce 3-hydroxy-3-methyl-2-ketobutyrate (HMKB). In the reductase reaction, this 2-ketoacid undergoes a metal-dependent reduction by NADPH to yield (R)-2,3-dihydroxy-isovalerate. This chain is Ketol-acid reductoisomerase (NADP(+)), found in Streptococcus pneumoniae (strain JJA).